The following is a 200-amino-acid chain: TATA-box-binding protein (200 aa).

Repeat copies occupy residues 25 to 101 (LQNI…ARII) and 115 to 192 (IQNI…YPVL).

It belongs to the TBP family. In terms of assembly, belongs to the TFIID complex together with the TBP-associated factors (TAFs). Binds DNA as monomer.

It is found in the nucleus. Functionally, general transcription factor that functions at the core of the DNA-binding multiprotein factor TFIID. Binding of TFIID to the TATA box is the initial transcriptional step of the pre-initiation complex (PIC), playing a role in the activation of eukaryotic genes transcribed by RNA polymerase II. The sequence is that of TATA-box-binding protein from Nicotiana tabacum (Common tobacco).